Consider the following 296-residue polypeptide: Iron-sulfur cluster carrier protein (296 aa).

Residues 1-17 (MSSNPFRIQNPQPQPQR) are compositionally biased toward low complexity. The interval 1 to 23 (MSSNPFRIQNPQPQPQRQPRDLR) is disordered. Position 52-59 (52-59 (GKGGVGKS)) interacts with ATP.

It belongs to the Mrp/NBP35 ATP-binding proteins family. As to quaternary structure, homodimer.

Functionally, binds and transfers iron-sulfur (Fe-S) clusters to target apoproteins. Can hydrolyze ATP. The chain is Iron-sulfur cluster carrier protein from Saccharolobus solfataricus (strain ATCC 35092 / DSM 1617 / JCM 11322 / P2) (Sulfolobus solfataricus).